The following is a 332-amino-acid chain: Transcription regulatory protein SNF6 (332 aa).

A Nuclear localization signal motif is present at residues 2–8 (GVIKKKR). The residue at position 165 (threonine 165) is a Phosphothreonine. The interval 278-299 (VTTVASQSPHATATEKEPVPAV) is disordered.

In terms of assembly, component of the SWI/SNF global transcription activator complex. The 1.14 MDa SWI/SNF complex is composed of 11 different subunits: one copy each of SWI1, SNF2/SWI2, SNF5, SNF12/SWP73, ARP7/SWP61, ARP9/SWP59; two copies each of SWI3, SNF6, SNF11, SWP82; and three copies of TAF14/SWP29.

It localises to the nucleus. In terms of biological role, involved in transcriptional activation. Component of the SWI/SNF complex, an ATP-dependent chromatin remodeling complex, which is required for the positive and negative regulation of gene expression of a large number of genes. It changes chromatin structure by altering DNA-histone contacts within a nucleosome, leading eventually to a change in nucleosome position, thus facilitating or repressing binding of gene-specific transcription factors. This is Transcription regulatory protein SNF6 (SNF6) from Saccharomyces cerevisiae (strain ATCC 204508 / S288c) (Baker's yeast).